The following is a 140-amino-acid chain: Ribosome-binding factor A (140 aa).

The segment at Lys121 to Lys140 is disordered. The segment covering Asp129–Lys140 has biased composition (acidic residues).

It belongs to the RbfA family. As to quaternary structure, monomer. Binds 30S ribosomal subunits, but not 50S ribosomal subunits or 70S ribosomes.

It localises to the cytoplasm. One of several proteins that assist in the late maturation steps of the functional core of the 30S ribosomal subunit. Associates with free 30S ribosomal subunits (but not with 30S subunits that are part of 70S ribosomes or polysomes). Required for efficient processing of 16S rRNA. May interact with the 5'-terminal helix region of 16S rRNA. The chain is Ribosome-binding factor A from Shewanella loihica (strain ATCC BAA-1088 / PV-4).